Reading from the N-terminus, the 576-residue chain is Arginine--tRNA ligase (576 aa).

A 'HIGH' region motif is present at residues alanine 126–histidine 136.

Belongs to the class-I aminoacyl-tRNA synthetase family. Monomer.

It localises to the cytoplasm. It catalyses the reaction tRNA(Arg) + L-arginine + ATP = L-arginyl-tRNA(Arg) + AMP + diphosphate. In Rickettsia africae (strain ESF-5), this protein is Arginine--tRNA ligase.